A 466-amino-acid chain; its full sequence is Uronate isomerase (466 aa).

Belongs to the metallo-dependent hydrolases superfamily. Uronate isomerase family.

It carries out the reaction D-glucuronate = D-fructuronate. The catalysed reaction is aldehydo-D-galacturonate = keto-D-tagaturonate. The protein operates within carbohydrate metabolism; pentose and glucuronate interconversion. This Lachnoclostridium phytofermentans (strain ATCC 700394 / DSM 18823 / ISDg) (Clostridium phytofermentans) protein is Uronate isomerase.